A 1002-amino-acid chain; its full sequence is Mitogen-activated protein kinase kinase kinase 21 (1002 aa).

Residues 1-26 (MALPVAEGTADTPLSPARDDSGSTSS) form a disordered region. Residues 24-88 (TSSGMWAALY…PASYVAPCGP (65 aa)) form the SH3 domain. The Protein kinase domain maps to 110–390 (LELKELIGAG…QLTAIEEAVL (281 aa)). ATP contacts are provided by residues 116–124 (IGAGGFGQV) and Lys137. The Proton acceptor role is filled by Asp247. The residue at position 283 (Thr283) is a Phosphothreonine; by autocatalysis. The residue at position 287 (Ser287) is a Phosphoserine; by autocatalysis and MAP4K1. Leucine-zipper stretches follow at residues 409–430 (IQQMFSELRTKEKELRSREEEL) and 444–466 (LRRREQQLAEREIDVLERELNVL). Disordered stretches follow at residues 508–531 (TVQASPTLDKRRSSDSGLCSPPGS), 574–604 (GCTWGPSSVQTKERPEGRERVRPLSDGNSPW), 640–689 (HRKP…VGAP), 721–778 (AQAP…SHSS), 797–823 (LGNARDLCGPTTLTPDPGSAAPESGCE), and 878–899 (QSAPEDSGLPHSPSPGPQRDLA). Phosphoserine occurs at positions 512, 527, and 531. A Phosphothreonine modification is found at Thr576. Residues 584–596 (TKERPEGRERVRP) show a composition bias toward basic and acidic residues. Ser598 carries the post-translational modification Phosphoserine. Residues 661–677 (DSQREDSSEAESREEGS) are compositionally biased toward basic and acidic residues. Composition is skewed to low complexity over residues 740-758 (QPASRCQSSPSSLLRQPSA) and 766-778 (STLLLPSAPSHSS).

Belongs to the protein kinase superfamily. STE Ser/Thr protein kinase family. MAP kinase kinase kinase subfamily. Homodimer. Interacts with TLR4. It depends on Mg(2+) as a cofactor. In terms of processing, autophosphorylation on serine and threonine residues within the activation loop plays a role in enzyme activation.

The enzyme catalyses L-seryl-[protein] + ATP = O-phospho-L-seryl-[protein] + ADP + H(+). It carries out the reaction L-threonyl-[protein] + ATP = O-phospho-L-threonyl-[protein] + ADP + H(+). Its activity is regulated as follows. Homodimerization via the leucine zipper domains is required for autophosphorylation and subsequent activation. Its function is as follows. Negative regulator of TLR4 signaling. Does not activate JNK1/MAPK8 pathway, p38/MAPK14, nor ERK2/MAPK1 pathways. The chain is Mitogen-activated protein kinase kinase kinase 21 (Map3k21) from Mus musculus (Mouse).